Consider the following 160-residue polypeptide: Probable transcriptional regulator YgiV (160 aa).

Its function is as follows. Represses expression of mcbR. The polypeptide is Probable transcriptional regulator YgiV (ygiV) (Escherichia coli O157:H7).